Consider the following 328-residue polypeptide: Alanine racemase (328 aa).

The Proton acceptor; specific for D-alanine role is filled by Lys33. Lys33 carries the N6-(pyridoxal phosphate)lysine modification. Arg118 contributes to the substrate binding site. The active-site Proton acceptor; specific for L-alanine is the Tyr237. Met283 provides a ligand contact to substrate.

This sequence belongs to the alanine racemase family. It depends on pyridoxal 5'-phosphate as a cofactor.

The enzyme catalyses L-alanine = D-alanine. It functions in the pathway amino-acid biosynthesis; D-alanine biosynthesis; D-alanine from L-alanine: step 1/1. In terms of biological role, catalyzes the interconversion of L-alanine and D-alanine. May also act on other amino acids. The sequence is that of Alanine racemase (alr) from Campylobacter jejuni subsp. jejuni serotype O:2 (strain ATCC 700819 / NCTC 11168).